The primary structure comprises 442 residues: 3-dehydroquinate synthase, chloroplastic (442 aa).

The transit peptide at M1–R58 directs the protein to the chloroplast. A59 is subject to N-acetylalanine. NAD(+)-binding positions include N119, D150–E152, K155, G183–D188, T208–T209, K221, K230, and T248–T251. E263 serves as a coordination point for a divalent metal cation. K305 lines the NAD(+) pocket. A divalent metal cation is bound by residues H326 and H343.

The protein belongs to the sugar phosphate cyclases superfamily. Dehydroquinate synthase family. In terms of assembly, homodimer. The cofactor is a divalent metal cation. It depends on NAD(+) as a cofactor.

The protein resides in the plastid. The protein localises to the chloroplast. The catalysed reaction is 7-phospho-2-dehydro-3-deoxy-D-arabino-heptonate = 3-dehydroquinate + phosphate. Its pathway is metabolic intermediate biosynthesis; chorismate biosynthesis; chorismate from D-erythrose 4-phosphate and phosphoenolpyruvate: step 2/7. Catalyzes the second step in the shikimate pathway. This is 3-dehydroquinate synthase, chloroplastic (DHQS) from Arabidopsis thaliana (Mouse-ear cress).